The chain runs to 310 residues: Probable manganese-dependent inorganic pyrophosphatase (310 aa).

His9, Asp13, Asp15, Asp76, His98, and Asp150 together coordinate Mn(2+).

Belongs to the PPase class C family. Homodimer. Requires Mn(2+) as cofactor.

It is found in the cytoplasm. It catalyses the reaction diphosphate + H2O = 2 phosphate + H(+). In Streptococcus mutans serotype c (strain ATCC 700610 / UA159), this protein is Probable manganese-dependent inorganic pyrophosphatase (ppaC).